We begin with the raw amino-acid sequence, 66 residues long: MPKMKTHRASAKRFKRTGNGGLKRHHAFTGHRFHGKTKKQRRHLRKAAMVSRSDLKRIKQMLSQMR.

A compositionally biased stretch (basic residues) spans 1–46 (MPKMKTHRASAKRFKRTGNGGLKRHHAFTGHRFHGKTKKQRRHLRK). Positions 1 to 50 (MPKMKTHRASAKRFKRTGNGGLKRHHAFTGHRFHGKTKKQRRHLRKAAMV) are disordered.

This sequence belongs to the bacterial ribosomal protein bL35 family.

In Lactobacillus delbrueckii subsp. bulgaricus (strain ATCC 11842 / DSM 20081 / BCRC 10696 / JCM 1002 / NBRC 13953 / NCIMB 11778 / NCTC 12712 / WDCM 00102 / Lb 14), this protein is Large ribosomal subunit protein bL35.